Reading from the N-terminus, the 341-residue chain is Ferredoxin--NADP reductase 2 (341 aa).

7 residues coordinate FAD: Asp42, Gln50, Tyr55, Ile95, Phe129, Asp294, and Ser335.

Belongs to the ferredoxin--NADP reductase type 2 family. As to quaternary structure, homodimer. Requires FAD as cofactor.

It catalyses the reaction 2 reduced [2Fe-2S]-[ferredoxin] + NADP(+) + H(+) = 2 oxidized [2Fe-2S]-[ferredoxin] + NADPH. The protein is Ferredoxin--NADP reductase 2 of Chloroherpeton thalassium (strain ATCC 35110 / GB-78).